Here is a 229-residue protein sequence, read N- to C-terminus: PHO85 cyclin-5 (229 aa).

The span at 1–24 shows a compositional bias: basic and acidic residues; the sequence is MDGNHRFTPDSKEFNTVVKSKESS. The interval 1-46 is disordered; the sequence is MDGNHRFTPDSKEFNTVVKSKESSTGRNPYQTPPLEHNGTHHQTNY.

Belongs to the cyclin family. PCL1,2 subfamily. In terms of assembly, forms a cyclin-CDK complex with PHO85.

Cyclin partner of the cyclin-dependent kinase (CDK) PHO85. Positively controls degradation of transcription factor GCN4 under favorable growth conditions. The PCL5-PHO85 cyclin-CDK holoenzyme phosphorylates GCN4, which is required for its degradation by the E3 ubiquitin ligase complex SCF(Cdc4). Amino acid starvation reduces PCL5-PHO85-associated GCN4 kinase activity and leads to stabilization of GCN4. The chain is PHO85 cyclin-5 (PCL5) from Saccharomyces cerevisiae (strain ATCC 204508 / S288c) (Baker's yeast).